Reading from the N-terminus, the 407-residue chain is Phosphopentomutase (407 aa).

6 residues coordinate Mn(2+): D10, D306, H311, D347, H348, and H359.

Belongs to the phosphopentomutase family. The cofactor is Mn(2+).

It localises to the cytoplasm. The enzyme catalyses 2-deoxy-alpha-D-ribose 1-phosphate = 2-deoxy-D-ribose 5-phosphate. The catalysed reaction is alpha-D-ribose 1-phosphate = D-ribose 5-phosphate. The protein operates within carbohydrate degradation; 2-deoxy-D-ribose 1-phosphate degradation; D-glyceraldehyde 3-phosphate and acetaldehyde from 2-deoxy-alpha-D-ribose 1-phosphate: step 1/2. In terms of biological role, isomerase that catalyzes the conversion of deoxy-ribose 1-phosphate (dRib-1-P) and ribose 1-phosphate (Rib-1-P) to deoxy-ribose 5-phosphate (dRib-5-P) and ribose 5-phosphate (Rib-5-P), respectively. This Yersinia pseudotuberculosis serotype O:1b (strain IP 31758) protein is Phosphopentomutase.